Consider the following 125-residue polypeptide: Large ribosomal subunit protein uL22c (125 aa).

This sequence belongs to the universal ribosomal protein uL22 family. Part of the 50S ribosomal subunit.

The protein localises to the plastid. Its subcellular location is the chloroplast. This protein binds specifically to 23S rRNA. Functionally, the globular domain of the protein is located near the polypeptide exit tunnel on the outside of the subunit, while an extended beta-hairpin is found that lines the wall of the exit tunnel in the center of the 70S ribosome. This chain is Large ribosomal subunit protein uL22c (rpl22), found in Huperzia lucidula (Shining clubmoss).